The chain runs to 140 residues: Small ribosomal subunit protein uS12 (140 aa).

The interval 1-20 (MPTINQLVRKGRQSKVVKSD) is disordered. Aspartate 102 is subject to 3-methylthioaspartic acid. Residues 121–140 (DGRMQGRSKYGTKRPKAAKK) form a disordered region. Residues 130-140 (YGTKRPKAAKK) show a composition bias toward basic residues.

Belongs to the universal ribosomal protein uS12 family. Part of the 30S ribosomal subunit. Contacts proteins S8 and S17. May interact with IF1 in the 30S initiation complex.

Its function is as follows. With S4 and S5 plays an important role in translational accuracy. In terms of biological role, interacts with and stabilizes bases of the 16S rRNA that are involved in tRNA selection in the A site and with the mRNA backbone. Located at the interface of the 30S and 50S subunits, it traverses the body of the 30S subunit contacting proteins on the other side and probably holding the rRNA structure together. The combined cluster of proteins S8, S12 and S17 appears to hold together the shoulder and platform of the 30S subunit. This chain is Small ribosomal subunit protein uS12, found in Exiguobacterium sibiricum (strain DSM 17290 / CCUG 55495 / CIP 109462 / JCM 13490 / 255-15).